We begin with the raw amino-acid sequence, 75 residues long: Small ribosomal subunit protein bS18 (75 aa).

This sequence belongs to the bacterial ribosomal protein bS18 family. In terms of assembly, part of the 30S ribosomal subunit. Forms a tight heterodimer with protein bS6.

Its function is as follows. Binds as a heterodimer with protein bS6 to the central domain of the 16S rRNA, where it helps stabilize the platform of the 30S subunit. The chain is Small ribosomal subunit protein bS18 from Histophilus somni (strain 129Pt) (Haemophilus somnus).